Reading from the N-terminus, the 494-residue chain is Guanosine-5'-triphosphate,3'-diphosphate pyrophosphatase (494 aa).

The protein belongs to the GppA/Ppx family. GppA subfamily.

It carries out the reaction guanosine 3'-diphosphate 5'-triphosphate + H2O = guanosine 3',5'-bis(diphosphate) + phosphate + H(+). Its pathway is purine metabolism; ppGpp biosynthesis; ppGpp from GTP: step 2/2. Catalyzes the conversion of pppGpp to ppGpp. Guanosine pentaphosphate (pppGpp) is a cytoplasmic signaling molecule which together with ppGpp controls the 'stringent response', an adaptive process that allows bacteria to respond to amino acid starvation, resulting in the coordinated regulation of numerous cellular activities. This chain is Guanosine-5'-triphosphate,3'-diphosphate pyrophosphatase, found in Shigella flexneri.